A 253-amino-acid chain; its full sequence is Probable transcriptional regulatory protein TM_0466 (253 aa).

It belongs to the TACO1 family.

The protein resides in the cytoplasm. This chain is Probable transcriptional regulatory protein TM_0466, found in Thermotoga maritima (strain ATCC 43589 / DSM 3109 / JCM 10099 / NBRC 100826 / MSB8).